The chain runs to 278 residues: Protoheme IX farnesyltransferase 1 (278 aa).

Transmembrane regions (helical) follow at residues 12 to 32, 35 to 55, 76 to 96, 98 to 118, 129 to 149, 158 to 178, 199 to 221, 226 to 248, and 255 to 275; these read VIWLLILASVAGYIYGGGGVD, LFSLLAVAFLSTGGSAAFNHY, LITPNAALAYSLALSATGISL, FLLLGLLPGLFVLLGWLFYAV, WLNIFGGGFAGNAVFLGGYAL, AVLISFAIYLWIPSHIWALAF, ERAVAVISAINAAAAAYILWLYL, GAGGALVALGVAATIATSIYAAV, and MWKMYKASSPILALFLIALIL.

This sequence belongs to the UbiA prenyltransferase family. Protoheme IX farnesyltransferase subfamily.

It localises to the cell membrane. It carries out the reaction heme b + (2E,6E)-farnesyl diphosphate + H2O = Fe(II)-heme o + diphosphate. Its pathway is porphyrin-containing compound metabolism; heme O biosynthesis; heme O from protoheme: step 1/1. Its function is as follows. Converts heme B (protoheme IX) to heme O by substitution of the vinyl group on carbon 2 of heme B porphyrin ring with a hydroxyethyl farnesyl side group. The protein is Protoheme IX farnesyltransferase 1 of Pyrobaculum aerophilum (strain ATCC 51768 / DSM 7523 / JCM 9630 / CIP 104966 / NBRC 100827 / IM2).